Consider the following 846-residue polypeptide: Translation initiation factor IF-2 (846 aa).

Positions 94 to 263 (QRSPEEIQAE…HGFQNPTGPV (170 aa)) are disordered. The segment covering 96-135 (SPEEIQAEQKRELEERRAAENAARDKVEAEVRQRNEEQAR) has biased composition (basic and acidic residues). Composition is skewed to low complexity over residues 136 to 148 (RQAAGSTAAAPAP) and 158 to 176 (AAPVAAPAPVVADAPASED). 2 stretches are compositionally biased toward basic and acidic residues: residues 177–206 (AAARAAERKKDETRRNESRTRDDDRRRGEA) and 230–239 (TTDEESDGAR). The span at 240–253 (RGRGGKSKLKKRNQ) shows a compositional bias: basic residues. Residues 346–513 (SRAPVVTVMG…AVLLQAEILE (168 aa)) form the tr-type G domain. Positions 355–362 (GHVDHGKT) are G1. 355–362 (GHVDHGKT) contacts GTP. The G2 stretch occupies residues 380-384 (GITQH). The interval 401–404 (DTPG) is G3. Residues 401–405 (DTPGH) and 455–458 (NKID) contribute to the GTP site. A G4 region spans residues 455-458 (NKID). Positions 491 to 493 (SAK) are G5.

Belongs to the TRAFAC class translation factor GTPase superfamily. Classic translation factor GTPase family. IF-2 subfamily.

Its subcellular location is the cytoplasm. Its function is as follows. One of the essential components for the initiation of protein synthesis. Protects formylmethionyl-tRNA from spontaneous hydrolysis and promotes its binding to the 30S ribosomal subunits. Also involved in the hydrolysis of GTP during the formation of the 70S ribosomal complex. The chain is Translation initiation factor IF-2 from Pseudomonas putida (strain ATCC 700007 / DSM 6899 / JCM 31910 / BCRC 17059 / LMG 24140 / F1).